The primary structure comprises 414 residues: Dual-specificity RNA methyltransferase RlmN (414 aa).

Over residues 1-13 (MTSAVGISVPNTD) the composition is skewed to polar residues. The disordered stretch occupies residues 1 to 22 (MTSAVGISVPNTDAQSSQSASQ). Glutamate 124 serves as the catalytic Proton acceptor. Residues 134 to 377 (TGSRKTLCIS…CTIRQTRGDD (244 aa)) form the Radical SAM core domain. Cysteines 141 and 382 form a disulfide. [4Fe-4S] cluster is bound by residues cysteine 148, cysteine 152, and cysteine 155. S-adenosyl-L-methionine-binding positions include 204–205 (GE), serine 236, 258–260 (SLH), and asparagine 339. Cysteine 382 acts as the S-methylcysteine intermediate in catalysis.

Belongs to the radical SAM superfamily. RlmN family. [4Fe-4S] cluster serves as cofactor.

The protein localises to the cytoplasm. The catalysed reaction is adenosine(2503) in 23S rRNA + 2 reduced [2Fe-2S]-[ferredoxin] + 2 S-adenosyl-L-methionine = 2-methyladenosine(2503) in 23S rRNA + 5'-deoxyadenosine + L-methionine + 2 oxidized [2Fe-2S]-[ferredoxin] + S-adenosyl-L-homocysteine. It carries out the reaction adenosine(37) in tRNA + 2 reduced [2Fe-2S]-[ferredoxin] + 2 S-adenosyl-L-methionine = 2-methyladenosine(37) in tRNA + 5'-deoxyadenosine + L-methionine + 2 oxidized [2Fe-2S]-[ferredoxin] + S-adenosyl-L-homocysteine. In terms of biological role, specifically methylates position 2 of adenine 2503 in 23S rRNA and position 2 of adenine 37 in tRNAs. m2A2503 modification seems to play a crucial role in the proofreading step occurring at the peptidyl transferase center and thus would serve to optimize ribosomal fidelity. The protein is Dual-specificity RNA methyltransferase RlmN of Acinetobacter baylyi (strain ATCC 33305 / BD413 / ADP1).